The sequence spans 297 residues: Glutamyl-Q tRNA(Asp) synthetase (297 aa).

L-glutamate contacts are provided by residues 7 to 11 (RFAPS) and Glu-43. Residues 10–20 (PSPTGPLHFGS) carry the 'HIGH' region motif. Residues Cys-99, Cys-101, Tyr-122, and Cys-126 each coordinate Zn(2+). Positions 182 and 200 each coordinate L-glutamate. A 'KMSKS' region motif is present at residues 238–242 (KLSKQ). Lys-241 lines the ATP pocket.

Belongs to the class-I aminoacyl-tRNA synthetase family. GluQ subfamily. It depends on Zn(2+) as a cofactor.

Its function is as follows. Catalyzes the tRNA-independent activation of glutamate in presence of ATP and the subsequent transfer of glutamate onto a tRNA(Asp). Glutamate is transferred on the 2-amino-5-(4,5-dihydroxy-2-cyclopenten-1-yl) moiety of the queuosine in the wobble position of the QUC anticodon. The protein is Glutamyl-Q tRNA(Asp) synthetase of Burkholderia pseudomallei (strain K96243).